The primary structure comprises 831 residues: Prickle-like protein 1 (831 aa).

Residues 14 to 122 (FGCQRSSTSD…TIKLLSRAMM (109 aa)) enclose the PET domain. LIM zinc-binding domains lie at 124-189 (AVCE…LLKP), 189-249 (PRCS…LYAE), and 249-313 (EYCE…EDIH). Positions 314–346 (ASDSSDSAFQSARSRDSRRSVRMGRSSRSADQC) are disordered. Residues S315, S591, and S594 each carry the phosphoserine modification. 2 disordered regions span residues 664 to 688 (EERG…NALN) and 763 to 831 (CSSS…CIIS). Over residues 669–680 (RPHHHRHRRSRK) the composition is skewed to basic residues. At S683 the chain carries Phosphoserine. Over residues 797–812 (DLSSPASALPTPQFNQ) the composition is skewed to polar residues. Basic residues predominate over residues 815–831 (TKSKKKKGHRGKNCIIS). C828 is subject to Cysteine methyl ester. The S-farnesyl cysteine moiety is linked to residue C828. Residues 829 to 831 (IIS) constitute a propeptide, removed in mature form.

The protein belongs to the prickle / espinas / testin family. As to quaternary structure, interacts with REST.

It localises to the nucleus membrane. The protein localises to the cytoplasm. The protein resides in the cytosol. In terms of biological role, involved in the planar cell polarity pathway that controls convergent extension during gastrulation and neural tube closure. Convergent extension is a complex morphogenetic process during which cells elongate, move mediolaterally, and intercalate between neighboring cells, leading to convergence toward the mediolateral axis and extension along the anteroposterior axis. Necessary for nuclear localization of REST. May serve as nuclear receptor. This chain is Prickle-like protein 1 (Prickle1), found in Rattus norvegicus (Rat).